A 321-amino-acid chain; its full sequence is Coproporphyrin III ferrochelatase (321 aa).

Fe(2+)-binding residues include His-185 and Glu-267.

It belongs to the ferrochelatase family.

Its subcellular location is the cytoplasm. The catalysed reaction is Fe-coproporphyrin III + 2 H(+) = coproporphyrin III + Fe(2+). It participates in porphyrin-containing compound metabolism; protoheme biosynthesis. Its function is as follows. Involved in coproporphyrin-dependent heme b biosynthesis. Catalyzes the insertion of ferrous iron into coproporphyrin III to form Fe-coproporphyrin III. This Lacticaseibacillus casei (strain BL23) (Lactobacillus casei) protein is Coproporphyrin III ferrochelatase.